A 168-amino-acid chain; its full sequence is Large ribosomal subunit protein uL16 (168 aa).

It belongs to the universal ribosomal protein uL16 family.

The polypeptide is Large ribosomal subunit protein uL16 (Thermofilum pendens (strain DSM 2475 / Hrk 5)).